Consider the following 345-residue polypeptide: Phosphate import ATP-binding protein PstB 2 (345 aa).

Positions 1-57 (MSDTPQSEPRRSDDRSGADDATAAAAGSTDAAAAAVSSKTGGIAGPPGGPGEVDGDE) are disordered. A compositionally biased stretch (basic and acidic residues) spans 8–18 (EPRRSDDRSGA). Residues 19 to 35 (DDATAAAAGSTDAAAAA) are compositionally biased toward low complexity. Positions 42 to 52 (GIAGPPGGPGE) are enriched in gly residues. Residues 86-340 (VSVSDLDTYY…PQSQRVEDYV (255 aa)) form the ABC transporter domain. 118-125 (GPSGCGKS) serves as a coordination point for ATP.

This sequence belongs to the ABC transporter superfamily. Phosphate importer (TC 3.A.1.7) family. In terms of assembly, the complex is composed of two ATP-binding proteins (PstB), two transmembrane proteins (PstC and PstA) and a solute-binding protein (PstS).

It is found in the cell membrane. The catalysed reaction is phosphate(out) + ATP + H2O = ADP + 2 phosphate(in) + H(+). In terms of biological role, part of the ABC transporter complex PstSACB involved in phosphate import. Responsible for energy coupling to the transport system. The sequence is that of Phosphate import ATP-binding protein PstB 2 from Halobacterium salinarum (strain ATCC 700922 / JCM 11081 / NRC-1) (Halobacterium halobium).